The primary structure comprises 302 residues: MTIVSPDKLPSARAVELTAPLDDIYQILNEDGAVIIKNFIPLELVDKINKEVDPYLAQHAAGPNHMSEIYKLTVGSKTKHMGNLTMASKSFRDEVLNHPSMHAISEKLFRANFGDYWLNRAAVLEVDSGEKAQGLHRDDSLYPWKAFLTKDSPELMVNFFIALTEFREENGATRLVLGSHKWEDSTRYPSPEQTIPAEMQAGDAIVYLASLFHGAGQNRSQKTRRGLSITTHPAHFTPMESHIDVPRAIIENMTPLAQKMIGWRTWSTNHGVPVWTVRDGRMEDELKLKSLESPKQIQAAVI.

Residues His-136, Asp-138, and His-213 each contribute to the Fe cation site.

The protein belongs to the PhyH family. As to quaternary structure, homodimer. Fe cation serves as cofactor.

It localises to the peroxisome matrix. It participates in secondary metabolite biosynthesis; terpenoid biosynthesis. Functionally, dioxygenase; part of the gene cluster that mediates the biosynthesis of 15-deoxyoxalicine B. The first step of the pathway is the synthesis of nicotinyl-CoA from nicotinic acid by the nicotinic acid-CoA ligase olcI. Nicotinyl-CoA is then a substrate of polyketide synthase olcA to produce 4-hydroxy-6-(3-pyridinyl)-2H-pyran-2-one (HPPO) which is further prenylated by the polyprenyl transferase olcH to yield geranylgeranyl-HPPO. Geranylgeranyl pyrophosphate is provided by the cluster-specific geranylgeranyl pyrophosphate synthase olcC. The FAD-dependent monooxygenase olcE catalyzes the epoxidation of geranylgeranyl-HPPO and the terpene cyclase olcD catalyzes the cyclization of the terpenoid component, resulting in the formation of the tricyclic terpene moiety seen in predecaturin E. The cytochrome P450 monooxygenase then catalyzes the allylic oxidation of predecaturin E, which is followed by spirocylization with concomitant loss of one molecule of water to form decaturin E. Decaturin E is the substrate of the cytochrome P450 monooxygenase olcJ which hydroxylates it at the C-29 position to form decaturin F. The short-chain dehydrogenase/reductase olcF may catalyze the oxidation of decaturin F to generate the 29-hydroxyl-27-one intermediate, and subsequent hemiacetal formation probably leads to the formation of decaturin C. The dioxygenase olcK may be a peroxisomal enzyme that catalyzes the hydroxylation of decaturin C into decaturin A once decaturin C is shuttled into the peroxisome by the MFS transporter olcL. Finally the cytochrome P450 monooxygenase olcB catalyzes the oxidative rearrangement to yield 15-deoxyoxalicine B. In the absence of olcJ, decaturin E may be shunted to a pathway in which it is oxidized to a ketone, possibly by olcF, to form decaturin D, which undergoes further allylic oxidation to yield decaturin G. Moreover, in the absence of oclK or oclL, oclB can convert decaturin C into 15-deoxyoxalicine A. This is Dioxygenase olcK from Penicillium canescens.